Reading from the N-terminus, the 406-residue chain is Copper transport protein CTR1 (406 aa).

Over 1 to 152 the chain is Cytoplasmic; the sequence is MEGMNMGSSM…HHLHANNSGK (152 aa). 3 repeat units span residues 9 to 27, 28 to 46, and 47 to 65. A 3 X 19 AA tandem repeats of S-M-X-M-X-A-M-S-S-A-S-K-T-X-X-S-X-M-X region spans residues 9–65; the sequence is SMNMDAMSSASKTVASSMASMSMDAMSSASKTILSSMSSMSMEAMSSASKTLASTMS. The tract at residues 71–117 is disordered; the sequence is SMGSSSMSGMSMSMSSTPTSSASAQTTSDSSMSGMSGMSSSDNSSSS. A helical membrane pass occupies residues 153–173; it reads AFGIFLLFVVAAFVYKLLLFV. Topologically, residues 174–250 are extracellular; the sequence is SWCLEVHWFK…RAFLVFTSTM (77 aa). Residues 251 to 271 traverse the membrane as a helical segment; sequence IIYMLMLATMSFVLTYVFAVI. The Cytoplasmic segment spans residues 272–406; it reads TGLALSEVFF…LLPAEKFTHN (135 aa). The REP-III signature appears at 304–315; sequence CPGFGNCQCGRH. The disordered stretch occupies residues 318–406; the sequence is PSPDPIAVAD…LLPAEKFTHN (89 aa). Serine 344 carries the post-translational modification Phosphoserine. Residue lysine 345 forms a Glycyl lysine isopeptide (Lys-Gly) (interchain with G-Cter in ubiquitin) linkage. Phosphoserine is present on serine 349. Composition is skewed to polar residues over residues 349–375 and 384–395; these read SENNQKKTPTQEEGCNCATDSGKNQAN and SKLQEQSGNMDQ. Threonine 356 is subject to Phosphothreonine. Residue serine 369 is modified to Phosphoserine.

In terms of assembly, homooligomer. Extensively O-glycosylated.

The protein localises to the cell membrane. The catalysed reaction is Cu(2+)(in) = Cu(2+)(out). Its function is as follows. High-affinity copper transporter of plasma membrane that mediates copper uptake under low copper conditions. Copper transport through the high affinity system requiring CTRl supplies the iron transport multicopper ferroxidase FET3 with copper, which in turn is required for ferrous iron uptake. The energy for translocation is unlikely to be directly derived from ATP hydrolysis and the exact mechanism driving the transmembrane transport of copper has still to be determined. Binds 4 copper ions via its C-terminal cystein-rich domain and is able to deliver Cu(I) directly to both the chaperone ATX1 and to an N-terminal domain of the CCC2 protein. Also able to mediate the uptake of the anticancer drug cisplatin. The chain is Copper transport protein CTR1 from Saccharomyces cerevisiae (strain ATCC 204508 / S288c) (Baker's yeast).